Consider the following 161-residue polypeptide: uncharacterized protein (161 aa).

This is an uncharacterized protein from Sinorhizobium fredii (strain NBRC 101917 / NGR234).